Here is a 232-residue protein sequence, read N- to C-terminus: 6-phosphogluconolactonase (232 aa).

The protein belongs to the glucosamine/galactosamine-6-phosphate isomerase family. 6-phosphogluconolactonase subfamily.

The enzyme catalyses 6-phospho-D-glucono-1,5-lactone + H2O = 6-phospho-D-gluconate + H(+). It participates in carbohydrate degradation; pentose phosphate pathway; D-ribulose 5-phosphate from D-glucose 6-phosphate (oxidative stage): step 2/3. Its function is as follows. Hydrolysis of 6-phosphogluconolactone to 6-phosphogluconate. This Haemophilus influenzae (strain ATCC 51907 / DSM 11121 / KW20 / Rd) protein is 6-phosphogluconolactonase (pgl).